Consider the following 228-residue polypeptide: Deoxyribose-phosphate aldolase (228 aa).

Asp93 serves as the catalytic Proton donor/acceptor. The Schiff-base intermediate with acetaldehyde role is filled by Lys159. Lys188 (proton donor/acceptor) is an active-site residue.

Belongs to the DeoC/FbaB aldolase family. DeoC type 1 subfamily.

It localises to the cytoplasm. The catalysed reaction is 2-deoxy-D-ribose 5-phosphate = D-glyceraldehyde 3-phosphate + acetaldehyde. The protein operates within carbohydrate degradation; 2-deoxy-D-ribose 1-phosphate degradation; D-glyceraldehyde 3-phosphate and acetaldehyde from 2-deoxy-alpha-D-ribose 1-phosphate: step 2/2. Catalyzes a reversible aldol reaction between acetaldehyde and D-glyceraldehyde 3-phosphate to generate 2-deoxy-D-ribose 5-phosphate. The polypeptide is Deoxyribose-phosphate aldolase (Carboxydothermus hydrogenoformans (strain ATCC BAA-161 / DSM 6008 / Z-2901)).